We begin with the raw amino-acid sequence, 187 residues long: Ribose 1,5-bisphosphate phosphokinase PhnN (187 aa).

10–17 (GPSGSGKD) is a binding site for ATP.

This sequence belongs to the ribose 1,5-bisphosphokinase family.

It carries out the reaction alpha-D-ribose 1,5-bisphosphate + ATP = 5-phospho-alpha-D-ribose 1-diphosphate + ADP. It functions in the pathway metabolic intermediate biosynthesis; 5-phospho-alpha-D-ribose 1-diphosphate biosynthesis; 5-phospho-alpha-D-ribose 1-diphosphate from D-ribose 5-phosphate (route II): step 3/3. Functionally, catalyzes the phosphorylation of ribose 1,5-bisphosphate to 5-phospho-D-ribosyl alpha-1-diphosphate (PRPP). This is Ribose 1,5-bisphosphate phosphokinase PhnN from Klebsiella pneumoniae subsp. pneumoniae (strain ATCC 700721 / MGH 78578).